The chain runs to 673 residues: Polyunsaturated fatty acid 5-lipoxygenase (673 aa).

In terms of domain architecture, PLAT spans 2–117 (PSYTVTVATG…EIVLRDGRAK (116 aa)). Positions 17, 18, 19, 44, 45, 47, 79, and 80 each coordinate Ca(2+). Residues 118–673 (LARDDQIHIL…PDRIPNSVAI (556 aa)) form the Lipoxygenase domain. Ser271 bears the Phosphoserine mark. Fe cation is bound by residues His367 and His372. A Phosphoserine modification is found at Ser523. Fe cation-binding residues include His550, Asn554, and Ile673.

The protein belongs to the lipoxygenase family. As to quaternary structure, homodimer. Interacts with ALOX5AP and LTC4S. Interacts with COTL1, the interaction is required for stability and efficient catalytic activity. Interacts with PIK3R1; this interaction bridges ALOX5 with CD40 after CD40 ligation in B cells and leads to the production of reactive oxygen species (ROS). Interacts (via PLAT domain) with DICER1 (via Dicer dsRNA-binding fold domain); this interaction enhances arachidonate 5-lipoxygenase activity and modifies the miRNA precursor processing activity of DICER1. Fe cation serves as cofactor. Serine phosphorylation by MAPKAPK2 is stimulated by arachidonic acid. Phosphorylation on Ser-523 by PKA has an inhibitory effect. Phosphorylation on Ser-271 prevents export from the nucleus. Phosphorylation at Ser-523 is stimulated by 8-bromo-3',5'-cyclic AMP or prostaglandin E2.

Its subcellular location is the cytoplasm. It localises to the nucleus matrix. The protein localises to the nucleus membrane. It is found in the perinuclear region. The protein resides in the cytosol. Its subcellular location is the nucleus envelope. It localises to the nucleus intermembrane space. The enzyme catalyses (5Z,8Z,11Z,14Z)-eicosatetraenoate + O2 = leukotriene A4 + H2O. The catalysed reaction is 18-HEPE + O2 = (5S)-hydroperoxy-18-hydroxy-(7E,9E,11Z,14Z,16E)-eicosapentaenoate. It catalyses the reaction (18R)-hydroxy-(5Z,8Z,11Z,14Z,16E)-eicosapentaenoate + O2 = (5S)-hydroperoxy-(18R)-hydroxy-(6E,8Z,11Z,14Z,16E)-eicosapentaenoate. It carries out the reaction (18S)-hydroxy-(5Z,8Z,11Z,14Z,16E)-eicosapentaenoate + O2 = (5S)-hydroperoxy-(18S)-hydroxy-(6E,8Z,11Z,14Z,16E)-eicosapentaenoate. The enzyme catalyses (5S)-hydroperoxy-(18S)-hydroxy-(6E,8Z,11Z,14Z,16E)-eicosapentaenoate = (5S,6S)-epoxy-(18S)-hydroxy-(7E,9E,11Z,14Z,16E)-eicosapentaenoate + H2O. The catalysed reaction is (5S)-hydroperoxy-(18R)-hydroxy-(6E,8Z,11Z,14Z,16E)-eicosapentaenoate = (5S,6S)-epoxy-(18R)-hydroxy-(7E,9E,11Z,14Z,16E)-eicosapentaenoate + H2O. It catalyses the reaction (5S)-hydroperoxy-18-hydroxy-(7E,9E,11Z,14Z,16E)-eicosapentaenoate = (5S,6S)-epoxy-18-hydroxy-(7E,9E,11Z,14Z,16E)-eicosapentaenoate + H2O. It carries out the reaction (5Z,8Z,11Z,14Z)-eicosatetraenoate + O2 = (5S)-hydroperoxy-(6E,8Z,11Z,14Z)-eicosatetraenoate. The enzyme catalyses (15S)-hydroxy-(5Z,8Z,11Z,13E)-eicosatetraenoate + O2 = (5S)-hydroperoxy-(15S)-hydroxy-(6E,8Z,11Z,13E)-eicosatetraenoate. The catalysed reaction is (5S)-hydroperoxy-(6E,8Z,11Z,14Z)-eicosatetraenoate = leukotriene A4 + H2O. It catalyses the reaction (5Z,8Z,11Z,14Z)-eicosatetraenoate + O2 = (8S)-hydroperoxy-(5Z,9E,11Z,14Z)-eicosatetraenoate. It carries out the reaction (5Z,8Z,11Z,14Z)-eicosatetraenoate + O2 = (12S)-hydroperoxy-(5Z,8Z,10E,14Z)-eicosatetraenoate. The enzyme catalyses (5Z,8Z)-eicosadienoate + O2 = (5S)-hydroperoxy-(6E,8Z)-eicosadienoate. The catalysed reaction is (12S)-hydroxy-(5Z,8Z,10E,14Z)-eicosatetraenoate + O2 = (5S)-hydroperoxy-(12S)-hydroxy-(6E,8Z,10E,14Z)-eicosatetraenoate. It catalyses the reaction (5Z,8Z,11Z,14Z,17Z)-eicosapentaenoate + O2 = 5-hydroperoxy-(6E,8Z,11Z,14Z,17Z)-eicosapentaenoate. It carries out the reaction (4Z,7Z,10Z,13Z,16Z,19Z)-docosahexaenoate + O2 = (14S)-hydroperoxy-(4Z,7Z,10Z,12E,16Z,19Z)-docosahexaenoate. The enzyme catalyses (4Z,7Z,10Z,13Z,16Z,19Z)-docosahexaenoate + O2 = (7S)-hydroperoxy-(4Z,8E,10Z,13Z,16Z,19Z)-docosahexaenoate. The catalysed reaction is (4Z,7Z,10Z,13Z,16Z,19Z)-docosahexaenoate + O2 = (17S)-hydroperoxy-(4Z,7Z,10Z,13Z,15E,19Z)-docosahexaenoate. It functions in the pathway lipid metabolism; leukotriene A4 biosynthesis. Functionally, catalyzes the oxygenation of arachidonate to 5-hydroperoxyeicosatetraenoate (5-HPETE) followed by the dehydration to 5,6- epoxyeicosatetraenoate (Leukotriene A4/LTA4), the first two steps in the biosynthesis of leukotrienes, which are potent mediators of inflammation. Also catalyzes the oxygenation of arachidonate into 8-hydroperoxyicosatetraenoate (8-HPETE) and 12-hydroperoxyicosatetraenoate (12-HPETE). Displays lipoxin synthase activity being able to convert (15S)-HETE into a conjugate tetraene. Although arachidonate is the preferred substrate, this enzyme can also metabolize oxidized fatty acids derived from arachidonate such as (15S)-HETE, eicosapentaenoate (EPA) such as (18R)- and (18S)-HEPE or docosahexaenoate (DHA) which lead to the formation of specialized pro-resolving mediators (SPM) lipoxin and resolvins E and D respectively, therefore it participates in anti-inflammatory responses. Oxidation of DHA directly inhibits endothelial cell proliferation and sprouting angiogenesis via peroxisome proliferator-activated receptor gamma (PPARgamma). It does not catalyze the oxygenation of linoleic acid and does not convert (5S)-HETE to lipoxin isomers. In addition to inflammatory processes, it participates in dendritic cell migration, wound healing through an antioxidant mechanism based on heme oxygenase-1 (HO-1) regulation expression, monocyte adhesion to the endothelium via ITGAM expression on monocytes. Moreover, it helps establish an adaptive humoral immunity by regulating primary resting B cells and follicular helper T cells and participates in the CD40-induced production of reactive oxygen species (ROS) after CD40 ligation in B cells through interaction with PIK3R1 that bridges ALOX5 with CD40. May also play a role in glucose homeostasis, regulation of insulin secretion and palmitic acid-induced insulin resistance via AMPK. Can regulate bone mineralization and fat cell differentiation increases in induced pluripotent stem cells. The chain is Polyunsaturated fatty acid 5-lipoxygenase from Mesocricetus auratus (Golden hamster).